The sequence spans 227 residues: MAYPFELGFQDATSPIMEELLHFHDHTLMIVFLISSLVLYIISLMLTTKLTHTSTMDAQEVETIWTILPAIILILIALPSLRVLYMMDEINDPSLTVKTMGHQWYWSYEYTDYEDLNFDSYMIPTSELKPGELRLLEVDNRVVLPMELPIRMLISSEDVLHSWAVPSLGLKTDAIPGRLNQATLTSTRPGLYYGQCSEICGSNHSFMPIVLEMVPLKHFENWSSSML.

The Mitochondrial intermembrane segment spans residues 1 to 14 (MAYPFELGFQDATS). A helical membrane pass occupies residues 15–45 (PIMEELLHFHDHTLMIVFLISSLVLYIISLM). Over 46–59 (LTTKLTHTSTMDAQ) the chain is Mitochondrial matrix. Residues 60-87 (EVETIWTILPAIILILIALPSLRVLYMM) traverse the membrane as a helical segment. Topologically, residues 88–227 (DEINDPSLTV…HFENWSSSML (140 aa)) are mitochondrial intermembrane. Cu cation contacts are provided by H161, C196, E198, C200, H204, and M207. Position 198 (E198) interacts with Mg(2+).

Belongs to the cytochrome c oxidase subunit 2 family. As to quaternary structure, component of the cytochrome c oxidase (complex IV, CIV), a multisubunit enzyme composed of 14 subunits. The complex is composed of a catalytic core of 3 subunits MT-CO1, MT-CO2 and MT-CO3, encoded in the mitochondrial DNA, and 11 supernumerary subunits COX4I, COX5A, COX5B, COX6A, COX6B, COX6C, COX7A, COX7B, COX7C, COX8 and NDUFA4, which are encoded in the nuclear genome. The complex exists as a monomer or a dimer and forms supercomplexes (SCs) in the inner mitochondrial membrane with NADH-ubiquinone oxidoreductase (complex I, CI) and ubiquinol-cytochrome c oxidoreductase (cytochrome b-c1 complex, complex III, CIII), resulting in different assemblies (supercomplex SCI(1)III(2)IV(1) and megacomplex MCI(2)III(2)IV(2)). Found in a complex with TMEM177, COA6, COX18, COX20, SCO1 and SCO2. Interacts with TMEM177 in a COX20-dependent manner. Interacts with COX20. Interacts with COX16. Cu cation serves as cofactor.

It localises to the mitochondrion inner membrane. It carries out the reaction 4 Fe(II)-[cytochrome c] + O2 + 8 H(+)(in) = 4 Fe(III)-[cytochrome c] + 2 H2O + 4 H(+)(out). Functionally, component of the cytochrome c oxidase, the last enzyme in the mitochondrial electron transport chain which drives oxidative phosphorylation. The respiratory chain contains 3 multisubunit complexes succinate dehydrogenase (complex II, CII), ubiquinol-cytochrome c oxidoreductase (cytochrome b-c1 complex, complex III, CIII) and cytochrome c oxidase (complex IV, CIV), that cooperate to transfer electrons derived from NADH and succinate to molecular oxygen, creating an electrochemical gradient over the inner membrane that drives transmembrane transport and the ATP synthase. Cytochrome c oxidase is the component of the respiratory chain that catalyzes the reduction of oxygen to water. Electrons originating from reduced cytochrome c in the intermembrane space (IMS) are transferred via the dinuclear copper A center (CU(A)) of subunit 2 and heme A of subunit 1 to the active site in subunit 1, a binuclear center (BNC) formed by heme A3 and copper B (CU(B)). The BNC reduces molecular oxygen to 2 water molecules using 4 electrons from cytochrome c in the IMS and 4 protons from the mitochondrial matrix. This chain is Cytochrome c oxidase subunit 2 (MT-CO2), found in Sciurus carolinensis (Eastern gray squirrel).